An 80-amino-acid polypeptide reads, in one-letter code: MITMKMFLFLNEACIFIDSVCEGIVFWGLCLFVCAECENASYRGAEVPYKTLFRSCDTSIFGVAECLNLVAIDPRSEAYC.

A helical transmembrane segment spans residues 13-33 (ACIFIDSVCEGIVFWGLCLFV).

This sequence belongs to the UPF0377 family.

It is found in the membrane. This Saccharomyces cerevisiae (strain ATCC 204508 / S288c) (Baker's yeast) protein is Putative UPF0377 protein YMR324C.